A 172-amino-acid chain; its full sequence is Protein CapG (172 aa).

The protein belongs to the transferase hexapeptide repeat family.

It functions in the pathway capsule biogenesis; capsule polysaccharide biosynthesis. Its function is as follows. Required for the biosynthesis of type 1 capsular polysaccharide. The polypeptide is Protein CapG (capG) (Staphylococcus aureus).